The chain runs to 463 residues: Flotillin-like protein 2 (463 aa).

A lipid anchor (S-palmitoyl cysteine) is attached at cysteine 35. Residues 305 to 354 (EYETKVQEANWELYNKQKQAEAVLYEKQKQAEAQKAEADATFYSKQKEAE) are a coiled coil.

It belongs to the band 7/mec-2 family. Flotillin subfamily. In terms of processing, may be palmitoylated.

It is found in the cell membrane. Its subcellular location is the membrane. The protein resides in the caveola. Its function is as follows. May act as a scaffolding protein within caveolar membranes, functionally participating in formation of caveolae or caveolae-like vesicles. In Arabidopsis thaliana (Mouse-ear cress), this protein is Flotillin-like protein 2 (FLOT2).